The primary structure comprises 91 residues: MPRSLKKGPFIDLHLLKKIEVAAEKNDRKPIKTWSRRSMILPQMVGLTIAVHNGRQHVPVLVNEDMVGHKLGEFAGTRNYRGHVADKKAKR.

It belongs to the universal ribosomal protein uS19 family.

Protein S19 forms a complex with S13 that binds strongly to the 16S ribosomal RNA. The polypeptide is Small ribosomal subunit protein uS19 (Pseudomonas fluorescens (strain Pf0-1)).